Reading from the N-terminus, the 205-residue chain is SREBP regulating gene protein (205 aa).

Over 1 to 16 (MVPCGAVLWRRLLRKR) the chain is Cytoplasmic. Residues 17-35 (WVLGVVFGLSLVYFLSSTF) form a helical membrane-spanning segment. Residues 36–205 (KQEERTVRDR…GEYPPELLPV (170 aa)) are Lumenal-facing. A glycan (N-linked (GlcNAc...) asparagine) is linked at Asn-67.

This sequence belongs to the SPRING family.

It localises to the golgi apparatus membrane. Its function is as follows. Positively regulates hepatic SREBP signaling pathway by modulating the proper localization of SCAP (SREBP cleavage-activating protein) to the endoplasmic reticulum, thereby controlling the level of functional SCAP. The polypeptide is SREBP regulating gene protein (Gallus gallus (Chicken)).